The primary structure comprises 66 residues: FMRFamide-like neuropeptide 21 (66 aa).

The signal sequence occupies residues 1 to 16; it reads MRLFILLSCLLAWVLA.

Belongs to the FARP (FMRFamide related peptide) family. Post-translationally, may be processed by convertase egl-3. In terms of tissue distribution, expressed in the ADL, ASE and ASH sensory neurons, the URA motor neurons and the MC, M2 and M4 pharyngeal neurons.

Its subcellular location is the secreted. In terms of biological role, FMRFamide-like neuropeptide. Involved in modulating locomotion quiescence during the sleep-like state called lethargus which occurs during molting between larval and adult stages, acting via the G-protein coupled receptor npr-1. Plays a role in modulating social and feeding behavior. Functionally, ligand to G-protein coupled receptor npr-1. This is FMRFamide-like neuropeptide 21 from Caenorhabditis elegans.